We begin with the raw amino-acid sequence, 915 residues long: MAASVEPRQPFGRLDAPATAPTARAPGSNGIRRRADSPVRGCGFPSLISPPRKGPVAEEEEDDDDEDDEGHEDWREAYGSHLQLEVEPSTRDPRDEGTADAWIERNPSLIRLTGKHPLNCEPPLARLMHHGFITPAPLHYVRNHGAVPRGDWATWTVEVTGLVRRPARLTMDELANGFPAAEVPATLVCAGNRRKEQNMVQQTVGFNWGAAGVSTSVWRGARLRDVLLRCGVMSKKGQALNVCFEGAEDLPGGGGSKYGTSVSREWAMDPSRDIILPYAQNGEPLLPDHGYPVRVLIPGCIGGRMVKWVRRIVVTTAESDNYYHFKDNRVLPSHVDAELANAEAWWYRPEYIINELNTNCVITTPGHDEILPINAFTTQRAYTIKGYAYSGGGKKITRVEVTLDGGESWMLCTLDIPEKPNKYGRYWCWCFWSVEIEVLDLLGAKEVAVRTWDQTHNTQPEKLIWNLMGMMNNCWFKIKVNVCRPHKGEIGLVFEHPTQPGNQTGGWMARQKHLETAEAAAPGLKRSTSTPFMNTAGDKQFTMSEVRKHGSKESAWIVVHGHVYDCTAFLKDHPGGADSILINAGSDCTEEFDAIHSDKAKALLDTYRIGELITTGTGYNSDNSVHGGSSLSHLAPIREATKVAGAPIALSSPREKVPCRLVDKKELSHDVRLFRFALPSSDQVLGLPVGKHIFVCATIDGKLCMRAYTPTSMVDEIGQFELLVKVYFRDEHPKFPNGGLMTQYLESLQVGSSYIDVKGPLGHVEYTGRGNFVINGKQRRARRLAMICGGSGITPMYQVIQAVLRDQPEDETEMHLVYANRSEDDILLRDELDRWAAEYPDRLKVWYVIDQVKRPEDGWKFSVGFVTEDILRAHVPEGGDDTLALACGPPPMIKFAISPNLEKMKYDMANSFISF.

The tract at residues 1–102 (MAASVEPRQP…PRDEGTADAW (102 aa)) is disordered. A compositionally biased stretch (low complexity) spans 16–26 (APATAPTARAP). Over residues 57–71 (AEEEEDDDDEDDEGH) the composition is skewed to acidic residues. Residues 88-97 (PSTRDPRDEG) show a composition bias toward basic and acidic residues. C189 contacts Mo-molybdopterin. Residues 538-613 (DKQFTMSEVR…LDTYRIGELI (76 aa)) enclose the Cytochrome b5 heme-binding domain. Residues H573 and H596 each contribute to the heme site. One can recognise an FAD-binding FR-type domain in the interval 654–767 (REKVPCRLVD…KGPLGHVEYT (114 aa)). FAD is bound by residues 706–709 (RAYT), 723–727 (LVKVY), F728, F735, 740–742 (LMT), S791, and T794.

It belongs to the nitrate reductase family. In terms of assembly, homodimer. FAD serves as cofactor. The cofactor is heme. Requires Mo-molybdopterin as cofactor.

The catalysed reaction is nitrite + NAD(+) + H2O = nitrate + NADH + H(+). Nitrate reductase is a key enzyme involved in the first step of nitrate assimilation in plants, fungi and bacteria. The protein is Nitrate reductase [NADH] of Hordeum vulgare (Barley).